The following is a 135-amino-acid chain: RuBisCO chaperone RbcX (135 aa).

Positions 103–135 (QHLERMTQVSLSHPSPESEQQQFSDPDWDNLAS) are disordered. A compositionally biased stretch (polar residues) spans 109–126 (TQVSLSHPSPESEQQQFS).

Belongs to the RbcX family. As to quaternary structure, homodimer. Interacts with the exposed C-terminal peptide of RbcL ('Glu-459-Asp-468'); binds 1 RbcL peptide per homodimer. Contacts a second RbcL monomer via its peripheral polar surface. A slightly longer RbcL peptide binds to RbcX2 with a higher affinity.

The protein localises to the carboxysome. The protein resides in the cytoplasm. Functionally, an RbcL-specific chaperone. The central cleft of the RbcX homodimer (RbcX2) binds the C-terminus of an RbcL monomer, stabilizing the C-terminus and probably preventing its reassociation with chaperonin GroEL-ES. At the same time the peripheral region of RbcX2 binds a second RbcL monomer, bridging the RbcL homodimers in the correct orientation. The RbcX2(2)-bound RbcL dimers then assemble into the RbcL8 core (RbcL8-(RbcX2)8). RbcS binding triggers the release of RbcX2. In terms of biological role, required for optimal reconstitution of RuBisCO upon expression of rbcL-rbcS subunits in E.coli. The sequence is that of RuBisCO chaperone RbcX from Anabaena sp. (strain CA / ATCC 33047).